The sequence spans 218 residues: MSNFILKPGEKLPQDKLEELKKINDAVKKTKNFSKYLIDLRKLFQIDEVQVTSESKLFLAGFLEGEASLNISTKKLATSKFGLVVDPEFNVTQHVNGVKVLYLALEVFKTGRIRHKSGSNATLVLTIDNRQSLEEKVIPFYEQYVVAFSSPEKVKRVANFKALLELFNNDAHQDLEQLVNKILPIWDQMRKQQGQSNEGFPNLEAAQDFARNYKKGIK.

The Mg(2+) site is built by G65 and E66. The interval 71–75 is interaction with DNA; sequence ISTKK. D86 is a binding site for Mg(2+). Interaction with DNA regions lie at residues 90-94, 114-116, and 191-199; these read NVTQH, RHK, and KQQGQSNEG.

This sequence belongs to the LAGLIDADG endonuclease family. As to quaternary structure, homodimer. It depends on Mg(2+) as a cofactor.

The protein localises to the plastid. Its subcellular location is the chloroplast. In terms of biological role, endonuclease involved in intron homing. Recognizes a degenerate sequence of 17-19 bp to produce a staggered cut 5 bp downstream from the CeLSU.5 intron insertion site. In Chlamydomonas moewusii (Chlamydomonas eugametos), this protein is DNA endonuclease I-CeuI.